A 205-amino-acid chain; its full sequence is Ribosomal RNA small subunit methyltransferase J (205 aa).

Residues 56-57, 72-73, and aspartate 124 contribute to the S-adenosyl-L-methionine site; these read RD and ER.

The protein belongs to the methyltransferase superfamily. RsmJ family.

Its subcellular location is the cytoplasm. It catalyses the reaction guanosine(1516) in 16S rRNA + S-adenosyl-L-methionine = N(2)-methylguanosine(1516) in 16S rRNA + S-adenosyl-L-homocysteine + H(+). In terms of biological role, specifically methylates the guanosine in position 1516 of 16S rRNA. The polypeptide is Ribosomal RNA small subunit methyltransferase J (Brucella anthropi (strain ATCC 49188 / DSM 6882 / CCUG 24695 / JCM 21032 / LMG 3331 / NBRC 15819 / NCTC 12168 / Alc 37) (Ochrobactrum anthropi)).